Consider the following 304-residue polypeptide: Acetaldehyde dehydrogenase (304 aa).

Residue cysteine 131 is the Acyl-thioester intermediate of the active site. Residues 162–170 (SAGPGTRKN) and asparagine 273 contribute to the NAD(+) site.

The protein belongs to the acetaldehyde dehydrogenase family.

It carries out the reaction acetaldehyde + NAD(+) + CoA = acetyl-CoA + NADH + H(+). In Polaromonas naphthalenivorans (strain CJ2), this protein is Acetaldehyde dehydrogenase.